A 380-amino-acid polypeptide reads, in one-letter code: 3-dehydroquinate synthase (380 aa).

NAD(+) contacts are provided by residues 100–104, 124–125, K137, and K146; these read GAASD and TT. 3 residues coordinate Zn(2+): E179, H251, and H267. The tract at residues 320–343 is disordered; sequence YMQRDKKNMQSNDTDSDKDSREMP.

It belongs to the sugar phosphate cyclases superfamily. Dehydroquinate synthase family. The cofactor is NAD(+). Requires Co(2+) as cofactor. Zn(2+) is required as a cofactor.

The protein localises to the cytoplasm. It catalyses the reaction 7-phospho-2-dehydro-3-deoxy-D-arabino-heptonate = 3-dehydroquinate + phosphate. It functions in the pathway metabolic intermediate biosynthesis; chorismate biosynthesis; chorismate from D-erythrose 4-phosphate and phosphoenolpyruvate: step 2/7. In terms of biological role, catalyzes the conversion of 3-deoxy-D-arabino-heptulosonate 7-phosphate (DAHP) to dehydroquinate (DHQ). In Tropheryma whipplei (strain Twist) (Whipple's bacillus), this protein is 3-dehydroquinate synthase.